A 734-amino-acid polypeptide reads, in one-letter code: Cell surface glycoprotein gp138B (734 aa).

A signal peptide spans 1–20 (MKIILTLSIFLICFLQLGQS). Residues Asn58, Asn89, Asn124, Asn198, Asn224, Asn392, Asn420, Asn435, Asn482, Asn498, Asn523, Asn596, Asn605, Asn614, Asn621, and Asn630 are each glycosylated (N-linked (GlcNAc...) asparagine). The 89-residue stretch at 504-592 (PFIKSYGFLE…SSNEVTFYYF (89 aa)) folds into the IPT/TIG domain. The segment at 678–712 (GETPTPSTTPSTTPSTTPSTTPSSTPTQSPGDDGS) is disordered. Low complexity predominate over residues 680–712 (TPTPSTTPSTTPSTTPSTTPSSTPTQSPGDDGS). Repeat copies occupy residues 683 to 686 (PSTT), 687 to 690 (PSTT), 691 to 694 (PSTT), and 695 to 698 (PSTT). A 4 X 4 AA tandem repeats of P-S-T-T region spans residues 683-698 (PSTTPSTTPSTTPSTT). Gly708 carries GPI-like-anchor amidated glycine lipidation. The propeptide at 709-734 (DDGSTSSTLSISFYLITLLLLTQQFI) is removed in mature form.

Post-translationally, the sugar chains may play important roles in cell fusion. In terms of processing, the GPI-like-anchor contains a phosphoceramide group, rather than a phosphatidyl group.

Its subcellular location is the cell membrane. Its function is as follows. Involved in the sexual cell fusion of D.discoideum. This Dictyostelium discoideum (Social amoeba) protein is Cell surface glycoprotein gp138B (GP138B).